The chain runs to 423 residues: Phosphoribosylamine--glycine ligase (423 aa).

An ATP-grasp domain is found at 107–312 (KDLCARYGIP…LLPLLYAAAT (206 aa)). ATP is bound at residue 133–193 (IREEGAPIVI…EAYLDGEEAS (61 aa)). Mg(2+) is bound by residues Glu-282 and Asn-284.

This sequence belongs to the GARS family. It depends on Mg(2+) as a cofactor. Mn(2+) serves as cofactor.

It carries out the reaction 5-phospho-beta-D-ribosylamine + glycine + ATP = N(1)-(5-phospho-beta-D-ribosyl)glycinamide + ADP + phosphate + H(+). Its pathway is purine metabolism; IMP biosynthesis via de novo pathway; N(1)-(5-phospho-D-ribosyl)glycinamide from 5-phospho-alpha-D-ribose 1-diphosphate: step 2/2. This is Phosphoribosylamine--glycine ligase from Rhizobium meliloti (strain 1021) (Ensifer meliloti).